We begin with the raw amino-acid sequence, 493 residues long: Ketol-acid reductoisomerase (NADP(+)) (493 aa).

Residues 14–208 enclose the KARI N-terminal Rossmann domain; it reads LDQLGRCRFM…GGDRAGVLES (195 aa). NADP(+)-binding positions include 45 to 48, R68, R76, S78, and 108 to 110; these read CGAQ and DKQ. The active site involves H132. G158 is a binding site for NADP(+). KARI C-terminal knotted domains lie at 209-345 and 346-486; these read SFVA…APKA and DGIK…MTDM. 4 residues coordinate Mg(2+): D217, E221, E390, and E394. S415 is a binding site for substrate.

This sequence belongs to the ketol-acid reductoisomerase family. Mg(2+) serves as cofactor.

The catalysed reaction is (2R)-2,3-dihydroxy-3-methylbutanoate + NADP(+) = (2S)-2-acetolactate + NADPH + H(+). It carries out the reaction (2R,3R)-2,3-dihydroxy-3-methylpentanoate + NADP(+) = (S)-2-ethyl-2-hydroxy-3-oxobutanoate + NADPH + H(+). It participates in amino-acid biosynthesis; L-isoleucine biosynthesis; L-isoleucine from 2-oxobutanoate: step 2/4. The protein operates within amino-acid biosynthesis; L-valine biosynthesis; L-valine from pyruvate: step 2/4. In terms of biological role, involved in the biosynthesis of branched-chain amino acids (BCAA). Catalyzes an alkyl-migration followed by a ketol-acid reduction of (S)-2-acetolactate (S2AL) to yield (R)-2,3-dihydroxy-isovalerate. In the isomerase reaction, S2AL is rearranged via a Mg-dependent methyl migration to produce 3-hydroxy-3-methyl-2-ketobutyrate (HMKB). In the reductase reaction, this 2-ketoacid undergoes a metal-dependent reduction by NADPH to yield (R)-2,3-dihydroxy-isovalerate. This Mannheimia succiniciproducens (strain KCTC 0769BP / MBEL55E) protein is Ketol-acid reductoisomerase (NADP(+)).